Consider the following 429-residue polypeptide: Protein FAM98B (429 aa).

The interval 304 to 429 (RVPDRGGRPN…GGGGGGYRRY (126 aa)) is disordered. The span at 305–314 (VPDRGGRPNE) shows a compositional bias: basic and acidic residues. Positions 332-429 (GGRGGWGGGG…GGGGGGYRRY (98 aa)) are enriched in gly residues.

This sequence belongs to the FAM98 family. In terms of assembly, homodimer. Component of a tRNA-splicing ligase complex. Interacts with FAM98A.

It localises to the nucleus. It is found in the cytoplasm. Functionally, positively stimulates PRMT1-induced protein arginine dimethylated arginine methylation. The polypeptide is Protein FAM98B (Fam98b) (Mus musculus (Mouse)).